A 257-amino-acid chain; its full sequence is uncharacterized protein (257 aa).

2 disordered regions span residues 1 to 178 and 194 to 248; these read MAMF…SYDS and AITK…LAGN. Residues 12-21 show a composition bias toward basic residues; the sequence is SKLKKGRRKL. A compositionally biased stretch (low complexity) spans 50–71; the sequence is NTNSGSSSDGEDGLLTSSGSDS. The span at 72 to 94 shows a compositional bias: polar residues; the sequence is VFNSTDYFSTPEDSQNCTPSDVS. The span at 102–114 shows a compositional bias: basic and acidic residues; it reads LDFKPADVLHDSE. The span at 115–126 shows a compositional bias: polar residues; sequence NSTSPKFITSLV. Over residues 127–136 the composition is skewed to low complexity; sequence SSDSENSGAD. A compositionally biased stretch (acidic residues) spans 163–178; that stretch reads ITSEEDCCVQEDSYDS.

The protein belongs to the herpesviridae BKRF4 family.

This is an uncharacterized protein from Saimiriine herpesvirus 2 (strain 11) (SaHV-2).